A 111-amino-acid chain; its full sequence is Probable 4-amino-4-deoxy-L-arabinose-phosphoundecaprenol flippase subunit ArnE (111 aa).

The Cytoplasmic segment spans residues Met-1–His-35. The chain crosses the membrane as a helical span at residues Ile-36–Leu-56. In terms of domain architecture, EamA spans Leu-40–Ser-109. Over Val-57–Asn-60 the chain is Periplasmic. Residues Val-61–Ala-81 traverse the membrane as a helical segment. Over Val-82–Glu-87 the chain is Cytoplasmic. A helical transmembrane segment spans residues Pro-88–Gly-108. Over Ser-109–Val-111 the chain is Periplasmic.

Belongs to the ArnE family. Heterodimer of ArnE and ArnF.

It localises to the cell inner membrane. Its pathway is bacterial outer membrane biogenesis; lipopolysaccharide biosynthesis. Translocates 4-amino-4-deoxy-L-arabinose-phosphoundecaprenol (alpha-L-Ara4N-phosphoundecaprenol) from the cytoplasmic to the periplasmic side of the inner membrane. The sequence is that of Probable 4-amino-4-deoxy-L-arabinose-phosphoundecaprenol flippase subunit ArnE from Escherichia coli O157:H7.